Here is a 107-residue protein sequence, read N- to C-terminus: Prepilin peptidase-dependent protein C (107 aa).

Positions 1-10 (MSASLKNQQG) are excised as a propeptide. F11 is modified (N-methylphenylalanine). The helical transmembrane segment at 11–30 (FSLPEVMLAMVLMVMIVTAL) threads the bilayer.

The protein resides in the membrane. In terms of biological role, not yet known. This chain is Prepilin peptidase-dependent protein C (ppdC), found in Escherichia coli (strain K12).